Here is a 295-residue protein sequence, read N- to C-terminus: Inorganic pyrophosphatase 1 (295 aa).

Residue Asp19 is the Nucleophile of the active site. The Mg(2+) site is built by Asp19 and Asp21. Residue Asp21 is the Proton donor of the active site. Residues Asp30 and Asp105 each contribute to the substrate site. Asp190 provides a ligand contact to Mg(2+).

The protein belongs to the HAD-like hydrolase superfamily. In terms of assembly, tetramer. Requires Mg(2+) as cofactor. Fe(2+) serves as cofactor. The cofactor is Ni(2+). It depends on Co(2+) as a cofactor. Mn(2+) is required as a cofactor.

The enzyme catalyses diphosphate + H2O = 2 phosphate + H(+). Its function is as follows. Catalyzes the specific cleavage of pyrophosphate. The protein is Inorganic pyrophosphatase 1 (PS2) of Arabidopsis thaliana (Mouse-ear cress).